A 92-amino-acid polypeptide reads, in one-letter code: Small ribosomal subunit protein uS19 (92 aa).

This sequence belongs to the universal ribosomal protein uS19 family.

In terms of biological role, protein S19 forms a complex with S13 that binds strongly to the 16S ribosomal RNA. The polypeptide is Small ribosomal subunit protein uS19 (Lactococcus lactis subsp. lactis (strain IL1403) (Streptococcus lactis)).